Consider the following 1342-residue polypeptide: DNA-directed RNA polymerase subunit beta (1342 aa).

It belongs to the RNA polymerase beta chain family. As to quaternary structure, the RNAP catalytic core consists of 2 alpha, 1 beta, 1 beta' and 1 omega subunit. When a sigma factor is associated with the core the holoenzyme is formed, which can initiate transcription.

The enzyme catalyses RNA(n) + a ribonucleoside 5'-triphosphate = RNA(n+1) + diphosphate. Functionally, DNA-dependent RNA polymerase catalyzes the transcription of DNA into RNA using the four ribonucleoside triphosphates as substrates. In Buchnera aphidicola subsp. Acyrthosiphon pisum (strain 5A), this protein is DNA-directed RNA polymerase subunit beta.